The primary structure comprises 81 residues: Photosystem I iron-sulfur center (81 aa).

4Fe-4S ferredoxin-type domains are found at residues 2-31 (SHSVKIYDTCIGCTQCVRACPTDVLEMIPW) and 39-68 (IASAPRTEDCVGCKRCESACPTDFLSVRVY). 8 residues coordinate [4Fe-4S] cluster: cysteine 11, cysteine 14, cysteine 17, cysteine 21, cysteine 48, cysteine 51, cysteine 54, and cysteine 58.

In terms of assembly, the eukaryotic PSI reaction center is composed of at least 11 subunits. Requires [4Fe-4S] cluster as cofactor.

It is found in the plastid. The protein localises to the chloroplast thylakoid membrane. The catalysed reaction is reduced [plastocyanin] + hnu + oxidized [2Fe-2S]-[ferredoxin] = oxidized [plastocyanin] + reduced [2Fe-2S]-[ferredoxin]. In terms of biological role, apoprotein for the two 4Fe-4S centers FA and FB of photosystem I (PSI); essential for photochemical activity. FB is the terminal electron acceptor of PSI, donating electrons to ferredoxin. The C-terminus interacts with PsaA/B/D and helps assemble the protein into the PSI complex. Required for binding of PsaD and PsaE to PSI. PSI is a plastocyanin-ferredoxin oxidoreductase, converting photonic excitation into a charge separation, which transfers an electron from the donor P700 chlorophyll pair to the spectroscopically characterized acceptors A0, A1, FX, FA and FB in turn. This is Photosystem I iron-sulfur center from Phalaenopsis aphrodite subsp. formosana (Moth orchid).